The following is a 1726-amino-acid chain: Merozoite surface protein 1 (1726 aa).

Positions 1-19 (MKIIFFLCSFLFFIINTQC) are cleaved as a signal peptide. Over residues 61-124 (KGASAQSGTS…SGTSGTSPSS (64 aa)) the composition is skewed to low complexity. Residues 61–149 (KGASAQSGTS…PPADASDSDA (89 aa)) form a disordered region. Residues 125-134 (RSNTLPRSNT) show a composition bias toward polar residues. The N-linked (GlcNAc...) asparagine glycan is linked to asparagine 133. The segment covering 135 to 144 (SSGASPPADA) has biased composition (low complexity). 4 N-linked (GlcNAc...) asparagine glycosylation sites follow: asparagine 272, asparagine 501, asparagine 567, and asparagine 638. Residues 735 to 771 (SETTEDGGHSTHTLSQSGETEVTEETEETEETVGHTT) form a disordered region. Residues 755-765 (EVTEETEETEE) are compositionally biased toward acidic residues. 7 N-linked (GlcNAc...) asparagine glycosylation sites follow: asparagine 827, asparagine 924, asparagine 944, asparagine 990, asparagine 1016, asparagine 1114, and asparagine 1221. The segment covering 914-952 (TGTSSTSSPGNTTVNTAQSATHSNSQNQQSNASSTNTQN) has biased composition (low complexity). The tract at residues 914–961 (TGTSSTSSPGNTTVNTAQSATHSNSQNQQSNASSTNTQNGVAVSSGPA) is disordered. Disordered stretches follow at residues 1254–1284 (VTPP…TQIP) and 1476–1497 (KEKF…DEQK). The span at 1270–1284 (VSGSSGSTKEETQIP) shows a compositional bias: polar residues. A compositionally biased stretch (pro residues) spans 1481 to 1490 (SSPPTTPPSP). N-linked (GlcNAc...) asparagine glycosylation is present at asparagine 1613. EGF-like domains are found at residues 1617–1657 (HQCV…VENP) and 1658–1705 (NPTC…IFCS). 6 disulfide bridges follow: cysteine 1619/cysteine 1630, cysteine 1624/cysteine 1640, cysteine 1642/cysteine 1653, cysteine 1661/cysteine 1674, cysteine 1668/cysteine 1688, and cysteine 1690/cysteine 1704. Serine 1705 carries GPI-anchor amidated serine lipidation. Positions 1706–1726 (SSNFLGISFLLILMLILYSFI) are cleaved as a propeptide — removed in mature form.

As to quaternary structure, forms a complex composed of subunits p83, p30, p38, and p42 which remain non-covalently associated; the complex is formed at the merozoite surface prior to egress from host erythrocytes. Forms a complex composed of processed MSP1 subunits, MSP6 subunit p36 and MSP7; the complex is formed at the merozoite surface prior to egress from host erythrocytes. Within the complex, interacts (via subunit p38) with MSP6 subunit p36 and (via subunits p83, p30 and p38) with MSP7 (via subunit p22). Forms a complex composed of MSP1, MSP6, DBLMSP1 and DBLMSP2. Within the complex, interacts (via subunit p38) with DBLMSP1 and DBLMSP2. Forms a complex composed of MSP1, and rhoptry proteins RhopH3, RAP1 and CLAG9/RhopH3. Within the complex, interacts (via subunits p42 and p19) with RhopH3 (via C-terminus). Forms a complex composed of MSP1, MSP6, MSP7, MSP9 and MSP3; within the complex, MSP6 and MSP9 mediate the binding to the host erythrocyte. Interacts (via subunits p19 and p42) with MSP9; the interaction is direct; MSP1 subunits p19 or p42, and MSP9 form a co-ligand complex that interacts with host SLC4A1/Band 3 protein. May interact with PFD6. Interacts with host spectrin. Interacts with host glycophorin GYPA in a sialic acid-independent manner. In terms of assembly, interacts with host proinflammatory cytokine S100P; the interaction blocks S100P inflammatory and chemotactic activities. As to quaternary structure, interacts with host SLC4A1/Band 3 (via 5ABC region) on the host erythrocyte surface in a sialic acid-independent manner. In terms of processing, the p190 precursor is cleaved by SUB1 prior to merozoite egress into 4 subunits p83, p30, p38, and p42 which remain non-covalently associated. SUB1-mediated proteolytic cleavage occurs in an orderly manner; the first cleavage occurs at the p30/p38 site, followed by cleavage at the p83/p30 site, the last cleavage occurs at the p38/p42 site. The order of cleavage is essential for parasite viability. SUB1-mediated processing is essential for merozoite egress. In a second processing step during erythrocyte invasion, p42 is cleaved by SUB2 into p33 and p19; the latter remains attached to the merozoite surface via its GPI-anchor and is endocytosed during the subsequent ring stage.

It localises to the cell membrane. The protein resides in the secreted. The protein localises to the vacuole membrane. Its function is as follows. During the asexual blood stage, involved in merozoite egress from host erythrocytes possibly via its interaction with the host cytoskeleton protein spectrin resulting in the destabilization of the host cytoskeleton and thus leading to erythrocyte cell membrane rupture. Involved in the binding to host erythrocytes and is required for host erythrocyte invasion. Functionally, by binding to host proinflammatory cytokine S100P may interfere with host immune responses. Involved in merozoite invasion of host erythrocytes. May play a role in the biogenesis and/or function of the food vacuole during the intraerythrocytic development. The protein is Merozoite surface protein 1 of Plasmodium falciparum (isolate Palo Alto / Uganda).